Here is a 314-residue protein sequence, read N- to C-terminus: Ribosomal RNA small subunit methyltransferase H (314 aa).

S-adenosyl-L-methionine-binding positions include 35 to 37, Asp55, Phe79, Asp101, and Gln108; that span reads GGH. Residues 276–296 are disordered; the sequence is QGGQTLKPVGKKLMPSEAEVA.

It belongs to the methyltransferase superfamily. RsmH family.

Its subcellular location is the cytoplasm. The catalysed reaction is cytidine(1402) in 16S rRNA + S-adenosyl-L-methionine = N(4)-methylcytidine(1402) in 16S rRNA + S-adenosyl-L-homocysteine + H(+). Its function is as follows. Specifically methylates the N4 position of cytidine in position 1402 (C1402) of 16S rRNA. The protein is Ribosomal RNA small subunit methyltransferase H of Pectobacterium atrosepticum (strain SCRI 1043 / ATCC BAA-672) (Erwinia carotovora subsp. atroseptica).